A 231-amino-acid polypeptide reads, in one-letter code: tRNA (guanine-N(7)-)-methyltransferase (231 aa).

Positions 62, 87, 114, and 136 each coordinate S-adenosyl-L-methionine. D136 is an active-site residue. Residues K140, D172, and 210-213 (TRYE) contribute to the substrate site.

It belongs to the class I-like SAM-binding methyltransferase superfamily. TrmB family.

It carries out the reaction guanosine(46) in tRNA + S-adenosyl-L-methionine = N(7)-methylguanosine(46) in tRNA + S-adenosyl-L-homocysteine. It functions in the pathway tRNA modification; N(7)-methylguanine-tRNA biosynthesis. Functionally, catalyzes the formation of N(7)-methylguanine at position 46 (m7G46) in tRNA. The polypeptide is tRNA (guanine-N(7)-)-methyltransferase (Zymomonas mobilis subsp. mobilis (strain ATCC 31821 / ZM4 / CP4)).